The sequence spans 529 residues: GMP synthase [glutamine-hydrolyzing] (529 aa).

Residues 9–211 (RILILDFGSQ…VKDICGCECL (203 aa)) form the Glutamine amidotransferase type-1 domain. The active-site Nucleophile is the Cys86. Catalysis depends on residues His185 and Glu187. The region spanning 212 to 404 (WTPATIIDDA…LGLPYDMLYR (193 aa)) is the GMPS ATP-PPase domain. 239–245 (SGGVDSS) provides a ligand contact to ATP.

In terms of assembly, homodimer.

The catalysed reaction is XMP + L-glutamine + ATP + H2O = GMP + L-glutamate + AMP + diphosphate + 2 H(+). Its pathway is purine metabolism; GMP biosynthesis; GMP from XMP (L-Gln route): step 1/1. Catalyzes the synthesis of GMP from XMP. The sequence is that of GMP synthase [glutamine-hydrolyzing] from Aeromonas hydrophila subsp. hydrophila (strain ATCC 7966 / DSM 30187 / BCRC 13018 / CCUG 14551 / JCM 1027 / KCTC 2358 / NCIMB 9240 / NCTC 8049).